The primary structure comprises 530 residues: MAEVNWQQLINQKRATREALIPEQWLLPATITSKVTPQSTASAFELLSEAGLLTEREIDITEKYTAVSLTAKIATGELSSYDVATAFCKRAAIVHQLTNSLTEIFFDKALERARWLDEYLSKEGKTVGPLHGLPITLKDMIHVKGQYSTMGFVGHLRHPPADENAVITDMLEAAGAVFYCKTNVPQTLFVCESFNNVFGRTLNPYKLCLSPGGSSSGEAAQLGLCGSIMGVGSDIAGSVRVPAIFTGVYGFRPTVNRLPWSKQAELALKGWQGVQPTLGPMARTAQDLTLFMKTIIQAEPWRYDSTALAIPWHDAPRKDKLTIGVWSQDPQFPVFPPIARTMASAVGRLRAAGHTIKIIEAPPTMKAMKIAMRWFALDQVNLPLKFVQDGAESPIADLDAMDPGKFLDPGYVADLSENISISADIHDYREEWAKIWREAGIDVLLCPASRGSAVPHGEFGPLMYTIPWNLLDFPSSVVPFGKADKTLDSKDGYDSTVVDGAPTGFQLVGWRFQDEQTLMATEVIADTLKA.

Catalysis depends on charge relay system residues lysine 138 and serine 214. Residues serine 214 and 235–238 (IAGS) each bind substrate. The Acyl-ester intermediate role is filled by serine 238.

It belongs to the amidase family.

It catalyses the reaction a monocarboxylic acid amide + H2O = a monocarboxylate + NH4(+). Its pathway is xenobiotic degradation. Its function is as follows. Amidase; part of the Fusarium detoxification of benzoxazolinone cluster 1 (FDB1) involved in the degradation of benzoxazolinones produced by the host plant. Maize, wheat, and rye produce the 2 benzoxazinone phytoanticipins 2,4-dihy-droxy-7-methoxy-1,4-benzoxazin-3-one (DIMBOA) and 2,4-dihydroxy-1,4-benzoxazin-3-one (DIBOA) that, due to their inherent instability once released, spontaneously degrade to the more stable corresponding benzoxazolinones, 6-methoxy-2-benzoxazolinone (MBOA) and 2-benzoxazolinone (BOA), respectively. The first step in the detoxification of benzoxazolinones involves the hydrolysis of the cyclic ester bond of benzoxazolinones by the FDB1 cluster gamma-lactamase MBL1 to aminophenols. MBL1 is able to convert BOA into 2-aminophenol (2-AP), as well as MBOA into 5-methoxy-2-aminophenol (2-AMP). The FDB2 cluster N-malonyltransferase FDB2/NAT1 then metabolizes aminophenols via N-malonylation to non-toxic malonamic acids. FDB2/NAT1 converts 2-AP into N-(2-hydroxyphenyl) malonamic acid (HPMA) and 2-AMP into N-(2-hydroxy-4-methoxyphenyl) malonamic acid (HMPMA). The duplicated dienlactone hydrolases DLH1 and DLH2 may provide redundant function for hydrolyzing the lactone moiety in the BOA molecule. The roles of the amidases an other enzymes encoded by the 2 FDB clusters have not been identified so far. The polypeptide is Amidase FVEG_08295 (Gibberella moniliformis (strain M3125 / FGSC 7600) (Maize ear and stalk rot fungus)).